Reading from the N-terminus, the 352-residue chain is tRNA N6-adenosine threonylcarbamoyltransferase (352 aa).

2 residues coordinate Fe cation: His115 and His119. Substrate-binding positions include 138 to 142 (LVSGG), Asp171, Gly184, and Asn276. Residue Asp304 coordinates Fe cation.

It belongs to the KAE1 / TsaD family. Fe(2+) serves as cofactor.

It localises to the cytoplasm. The catalysed reaction is L-threonylcarbamoyladenylate + adenosine(37) in tRNA = N(6)-L-threonylcarbamoyladenosine(37) in tRNA + AMP + H(+). Its function is as follows. Required for the formation of a threonylcarbamoyl group on adenosine at position 37 (t(6)A37) in tRNAs that read codons beginning with adenine. Is involved in the transfer of the threonylcarbamoyl moiety of threonylcarbamoyl-AMP (TC-AMP) to the N6 group of A37, together with TsaE and TsaB. TsaD likely plays a direct catalytic role in this reaction. This is tRNA N6-adenosine threonylcarbamoyltransferase from Xanthomonas axonopodis pv. citri (strain 306).